Consider the following 423-residue polypeptide: MAKTIQAIRGMNDCATTESPLWQWVESNVRNVLASYGYSEVRMPIVESTPLFARAIGEVTDVVSKEMYTFWDNDEQLTLRPEGTAGCVRAAIQHGWIYNNEQRLWYMGPMFRHERPQKGRYRQFHQAGVEVFGIANPEIDAELILLTARLWQALGIEQHLSLQLNSIGSLAARANYRAALVDFLANHTALMNDEEKERLVKNPLRILDTKNQALQAVLNDAPKLLDYLDEESRQHFAQLCQLLDAMGIRYEVNPKLVRGLDYYNKTVFEWVTSALGSQGTVCGGGRYDGLVEQLGGHATQGVGFAIGLERLVLLVQEVNKTMSLPKAVDIYLVYAGDNTTLKAFQIAEQIRNALPQLRVMTHCSGGNFKKQFKRADKVEAKIALVIGESELATQTIVLKELQNSSEQISIDQADLLAELSKRF.

This sequence belongs to the class-II aminoacyl-tRNA synthetase family. In terms of assembly, homodimer.

Its subcellular location is the cytoplasm. It carries out the reaction tRNA(His) + L-histidine + ATP = L-histidyl-tRNA(His) + AMP + diphosphate + H(+). This Haemophilus ducreyi (strain 35000HP / ATCC 700724) protein is Histidine--tRNA ligase.